Consider the following 420-residue polypeptide: UDP-N-acetyl-D-mannosamine dehydrogenase (420 aa).

NAD(+) is bound by residues Y13, I14, D33, T85, and T126. R160, V161, K212, N216, R219, H250, R252, and G263 together coordinate UDP-N-acetyl-alpha-D-mannosaminouronate. The active-site Proton donor/acceptor is the K212. The active-site Nucleophile is the C266. F330 and K331 together coordinate UDP-N-acetyl-alpha-D-mannosaminouronate. R338 is a binding site for NAD(+). K416 provides a ligand contact to UDP-N-acetyl-alpha-D-mannosaminouronate.

Belongs to the UDP-glucose/GDP-mannose dehydrogenase family. WecC subfamily. Homodimer.

It carries out the reaction UDP-N-acetyl-alpha-D-mannosamine + 2 NAD(+) + H2O = UDP-N-acetyl-alpha-D-mannosaminouronate + 2 NADH + 3 H(+). It functions in the pathway bacterial outer membrane biogenesis; enterobacterial common antigen biosynthesis. Functionally, catalyzes the four-electron oxidation of UDP-N-acetyl-D-mannosamine (UDP-ManNAc), reducing NAD(+) and releasing UDP-N-acetylmannosaminuronic acid (UDP-ManNAcA). In Salmonella typhi, this protein is UDP-N-acetyl-D-mannosamine dehydrogenase.